The chain runs to 99 residues: Large ribosomal subunit protein bL21 (99 aa).

It belongs to the bacterial ribosomal protein bL21 family. As to quaternary structure, part of the 50S ribosomal subunit. Contacts protein L20.

Its function is as follows. This protein binds to 23S rRNA in the presence of protein L20. The chain is Large ribosomal subunit protein bL21 from Deinococcus geothermalis (strain DSM 11300 / CIP 105573 / AG-3a).